Here is a 362-residue protein sequence, read N- to C-terminus: Dual-specificity RNA methyltransferase RlmN (362 aa).

The active-site Proton acceptor is E100. The Radical SAM core domain occupies 106–345 (EPDRNTLCIS…VFIRNSRGED (240 aa)). C113 and C350 form a disulfide bridge. C120, C124, and C127 together coordinate [4Fe-4S] cluster. Residues 177-178 (GE), S209, 231-233 (SLH), and N307 contribute to the S-adenosyl-L-methionine site. The active-site S-methylcysteine intermediate is C350.

The protein belongs to the radical SAM superfamily. RlmN family. It depends on [4Fe-4S] cluster as a cofactor.

The protein localises to the cytoplasm. The enzyme catalyses adenosine(2503) in 23S rRNA + 2 reduced [2Fe-2S]-[ferredoxin] + 2 S-adenosyl-L-methionine = 2-methyladenosine(2503) in 23S rRNA + 5'-deoxyadenosine + L-methionine + 2 oxidized [2Fe-2S]-[ferredoxin] + S-adenosyl-L-homocysteine. It catalyses the reaction adenosine(37) in tRNA + 2 reduced [2Fe-2S]-[ferredoxin] + 2 S-adenosyl-L-methionine = 2-methyladenosine(37) in tRNA + 5'-deoxyadenosine + L-methionine + 2 oxidized [2Fe-2S]-[ferredoxin] + S-adenosyl-L-homocysteine. In terms of biological role, specifically methylates position 2 of adenine 2503 in 23S rRNA and position 2 of adenine 37 in tRNAs. m2A2503 modification seems to play a crucial role in the proofreading step occurring at the peptidyl transferase center and thus would serve to optimize ribosomal fidelity. The sequence is that of Dual-specificity RNA methyltransferase RlmN from Desulfotalea psychrophila (strain LSv54 / DSM 12343).